The chain runs to 137 residues: MSKPLSFISMVAVILLASSTVKLAQGTLCSEKLNEVLSMVCEEYNPVIPHKRAMPGADSDLDALNPLQFVQEFEEEDNSISEPLRSALFPGSYLGGVLNSLAEVRRRTRQRQGIVERCCKKSCDMKALREYCSVVRN.

An N-terminal signal peptide occupies residues M1–G26. 3 disulfide bridges follow: C29/C119, C41/C132, and C118/C123. Positions A53 to V104 are cleaved as a propeptide — connecting peptide.

This sequence belongs to the insulin family. In terms of assembly, heterodimer of a B chain and an A chain linked by two disulfide bonds. In terms of tissue distribution, broadly expressed at a low level in the embryonic mesoderm, beginning at stage 12. Expressed at a high level in the embryonic anterior midgut, with expression diminishing at late stage 16. Expressed at a low level in larval imaginal disks. Expressed at a high level in larval salivary glands and in seven cells of each larval brain hemisphere that may correspond to neurosecretory cells.

It is found in the secreted. In terms of biological role, possible ligand of InR/insulin-like receptor. Plays a role in regulating body size by increasing cell size and cell number of individual organs. Probably mediates its growth effects by acting as a ligand for the insulin receptor and transducing a signal via the Chico/PI3K/Akt(PKB) pathway. This chain is Insulin-like peptide 2, found in Drosophila melanogaster (Fruit fly).